The primary structure comprises 456 residues: tRNA modification GTPase MnmE (456 aa).

(6S)-5-formyl-5,6,7,8-tetrahydrofolate is bound by residues Arg-24, Glu-81, and Lys-120. The 164-residue stretch at 216 to 379 folds into the TrmE-type G domain; it reads GMKVVIAGRP…LREHLKECIG (164 aa). Asn-226 serves as a coordination point for K(+). Residues 226 to 231, 245 to 251, and 270 to 273 each bind GTP; these read NAGKSS, TAIEGTT, and DTAG. Ser-230 lines the Mg(2+) pocket. The K(+) site is built by Thr-245, Ile-247, and Thr-250. Thr-251 is a Mg(2+) binding site. Lys-456 is a binding site for (6S)-5-formyl-5,6,7,8-tetrahydrofolate.

It belongs to the TRAFAC class TrmE-Era-EngA-EngB-Septin-like GTPase superfamily. TrmE GTPase family. Homodimer. Heterotetramer of two MnmE and two MnmG subunits. K(+) serves as cofactor.

It is found in the cytoplasm. Exhibits a very high intrinsic GTPase hydrolysis rate. Involved in the addition of a carboxymethylaminomethyl (cmnm) group at the wobble position (U34) of certain tRNAs, forming tRNA-cmnm(5)s(2)U34. This chain is tRNA modification GTPase MnmE, found in Marinobacter nauticus (strain ATCC 700491 / DSM 11845 / VT8) (Marinobacter aquaeolei).